The following is a 300-amino-acid chain: Phospholipase A1 (300 aa).

Cys-4 and Cys-87 form a disulfide bridge. Residue Ser-137 is the Nucleophile of the active site. The active-site Charge relay system is the Asp-165. 2 disulfides stabilise this stretch: Cys-176/Cys-181 and Cys-218/Cys-227. His-229 functions as the Charge relay system in the catalytic mechanism. Intrachain disulfides connect Cys-244–Cys-268, Cys-245–Cys-293, and Cys-261–Cys-266.

This sequence belongs to the AB hydrolase superfamily. Lipase family. In terms of tissue distribution, expressed by the venom gland.

It is found in the secreted. The enzyme catalyses a 1,2-diacyl-sn-glycero-3-phosphocholine + H2O = a 2-acyl-sn-glycero-3-phosphocholine + a fatty acid + H(+). Its activity is regulated as follows. Local inflammatory effects are inhibited by antiserotonin drugs (cyproheptadine and methysergide), indomethacin, betamethasone, and antihistamine (chlorpheniramine). Its function is as follows. Catalyzes the hydrolysis of phosphatidylcholine with phospholipase A1 activity. Shows potent hemolytic activity that is responsible for its lethal effect. May act as an allergen. In vivo, induces local inflammatory effects. The sequence is that of Phospholipase A1 from Vespa basalis (Hornet).